We begin with the raw amino-acid sequence, 275 residues long: Trypsin-4 (275 aa).

A signal peptide spans 1-18 (MSNKITILLAVLLAVVAC). Residues 19 to 48 (AQAHASHQRRVPYPLPRFLPRPHHTVSNHR) constitute a propeptide, activation peptide. Residues 49-274 (IVGGFEIDVA…VRDWIRETCG (226 aa)) enclose the Peptidase S1 domain. The cysteines at positions 74 and 90 are disulfide-linked. Catalysis depends on charge relay system residues H89 and D134. Intrachain disulfides connect C199–C215 and C226–C250. S230 serves as the catalytic Charge relay system.

The protein belongs to the peptidase S1 family. In terms of tissue distribution, expressed in the midgut. Expression levels drop a few hours after blood feeding and pick up again 28 hours later.

Its subcellular location is the secreted. It catalyses the reaction Preferential cleavage: Arg-|-Xaa, Lys-|-Xaa.. Constitutive trypsin that is expressed 2 days after emergence, coinciding with host seeking behavior of the female. The sequence is that of Trypsin-4 (TRYP4) from Anopheles gambiae (African malaria mosquito).